Reading from the N-terminus, the 253-residue chain is Ubiquinone biosynthesis O-methyltransferase (253 aa).

R47, G78, D99, and M141 together coordinate S-adenosyl-L-methionine.

It belongs to the methyltransferase superfamily. UbiG/COQ3 family.

The catalysed reaction is a 3-demethylubiquinol + S-adenosyl-L-methionine = a ubiquinol + S-adenosyl-L-homocysteine + H(+). It carries out the reaction a 3-(all-trans-polyprenyl)benzene-1,2-diol + S-adenosyl-L-methionine = a 2-methoxy-6-(all-trans-polyprenyl)phenol + S-adenosyl-L-homocysteine + H(+). It functions in the pathway cofactor biosynthesis; ubiquinone biosynthesis. O-methyltransferase that catalyzes the 2 O-methylation steps in the ubiquinone biosynthetic pathway. The chain is Ubiquinone biosynthesis O-methyltransferase from Bradyrhizobium diazoefficiens (strain JCM 10833 / BCRC 13528 / IAM 13628 / NBRC 14792 / USDA 110).